The sequence spans 231 residues: MSKNILVLGGSGALGAEVVKFFKSKSWNTISIDFRENPNADHSFTIKDSGEEEIKSVIEKINSKSIKVDTFVCAAGGWSGGNASSDEFLKSVKGMIDMNLYSAFASAHIGAKLLNQGGLFVLTGASAALNRTSGMIAYGATKAATHHIIKDLASENGGLPAGSTSLGILPVTLDTPTNRKYMSDANFDDWTPLSEVAEKLFEWSTNSDSRPTNGSLVKFETKSKVTTWTNL.

NADP(+) is bound at residue 6–30 (LVLGGSGALGAEVVKFFKSKSWNTI). The active-site Proton acceptor is the tyrosine 138.

Belongs to the short-chain dehydrogenases/reductases (SDR) family. In terms of assembly, homodimer.

The catalysed reaction is 5,6,7,8-tetrahydropteridine + NAD(+) = 6,7-dihydropteridine + NADH + H(+). It carries out the reaction 5,6,7,8-tetrahydropteridine + NADP(+) = 6,7-dihydropteridine + NADPH + H(+). The product of this enzyme, tetrahydrobiopterin (BH-4), is an essential cofactor for phenylalanine, tyrosine, and tryptophan hydroxylases. The protein is Dihydropteridine reductase (qdpr) of Dictyostelium discoideum (Social amoeba).